Consider the following 28-residue polypeptide: Conotoxin Cl9b (28 aa).

Residues P17 and P28 each carry the 4-hydroxyproline modification.

Post-translationally, contains 3 disulfide bonds. As to expression, expressed by the venom duct.

Its subcellular location is the secreted. The polypeptide is Conotoxin Cl9b (Californiconus californicus (California cone)).